The sequence spans 494 residues: MSTGTFVVSQPLNYRGGARVEPADASGTEKAFEPATGRVIATFTCSGEKEVNLAVQNAKAAFKIWSQKSGMERCRILLEAARIIREREDEIATMECINNGKSIFEARLDIDISWQCLEYYAGLAASMAGEHIQLPGGSFGYTRREPLGVCVGIGAWNYPFQIASWKSAPALACGNAMVFKPSPFTPVSALLLAEIYSEAGVPPGLFNVVQGGAATGQFLCQHPDVAKVSFTGSVPTGMKIMEMSAKGIKPVTLELGGKSPLIIFSDCDMNNAVKGALMANFLTQGQVCCNGTRVFVQKEILDKFTEEVVKQTQRIKIGDPLLEDTRMGPLINRPHLERVLGFVKVAKEQGAKVLCGGDIYVPEDPKLKDGYYMRPCVLTNCRDDMTCVKEEIFGPVMSILSFDTEAEVLERANDTTFGLAAGVFTRDIQRAHRVVAELQAGTCFINNYNVSPVELPFGGYKKSGFGRENGRVTIEYYSQLKTVCVEMGDVESAF.

Ser-2 is subject to N-acetylserine; in 4-trimethylaminobutyraldehyde dehydrogenase, N-terminally processed. An N6-acetyllysine; alternate modification is found at Lys-30. Lys-30 carries the N6-succinyllysine; alternate modification. Lys-59 bears the N6-succinyllysine mark. NAD(+) contacts are provided by residues Lys-180 and Gly-232–Thr-236. Residue Glu-254 is the Proton acceptor of the active site. Cys-288 functions as the Nucleophile in the catalytic mechanism. Lys-298 is modified (N6-acetyllysine). N6-acetyllysine; alternate is present on Lys-303. N6-succinyllysine; alternate is present on Lys-303. Lys-344 is subject to N6-acetyllysine. Glu-391 provides a ligand contact to NAD(+).

It belongs to the aldehyde dehydrogenase family. As to quaternary structure, homotetramer. In terms of tissue distribution, detected in brain (at protein level). High expression in adult liver, skeletal muscle, and kidney. Low levels in heart, pancreas, lung and brain. Expressed in all regions of the brain. Expression levels are variable in the different brain areas, with the highest levels in the spinal cord and the lowest in the occipital pole.

Its subcellular location is the cytoplasm. It is found in the cytosol. The enzyme catalyses 4-(trimethylamino)butanal + NAD(+) + H2O = 4-(trimethylamino)butanoate + NADH + 2 H(+). It carries out the reaction an aldehyde + NAD(+) + H2O = a carboxylate + NADH + 2 H(+). It catalyses the reaction 4-aminobutanal + NAD(+) + H2O = 4-aminobutanoate + NADH + 2 H(+). The catalysed reaction is formaldehyde + NAD(+) + H2O = formate + NADH + 2 H(+). The enzyme catalyses acetaldehyde + NAD(+) + H2O = acetate + NADH + 2 H(+). It carries out the reaction imidazole-4-acetaldehyde + NAD(+) + H2O = imidazole-4-acetate + NADH + 2 H(+). It catalyses the reaction acrolein + NAD(+) + H2O = acrylate + NADH + 2 H(+). The catalysed reaction is (5-hydroxyindol-3-yl)acetaldehyde + NAD(+) + H2O = (5-hydroxyindol-3-yl)acetate + NADH + 2 H(+). The enzyme catalyses 3,4-dihydroxyphenylacetaldehyde + NAD(+) + H2O = 3,4-dihydroxyphenylacetate + NADH + 2 H(+). It carries out the reaction spermine monoaldehyde + NAD(+) + H2O = N-(2-carboxyethyl)spermidine + NADH + 2 H(+). It catalyses the reaction propanal + NAD(+) + H2O = propanoate + NADH + 2 H(+). The catalysed reaction is butanal + NAD(+) + H2O = butanoate + NADH + 2 H(+). The enzyme catalyses pentanal + NAD(+) + H2O = pentanoate + NADH + 2 H(+). It carries out the reaction hexanal + NAD(+) + H2O = hexanoate + NADH + 2 H(+). Its pathway is amine and polyamine biosynthesis; carnitine biosynthesis. Converts gamma-trimethylaminobutyraldehyde into gamma-butyrobetaine with high efficiency (in vitro). Can catalyze the irreversible oxidation of a broad range of aldehydes to the corresponding acids in an NAD-dependent reaction, but with low efficiency. Catalyzes the oxidation of aldehydes arising from biogenic amines and polyamines. The chain is 4-trimethylaminobutyraldehyde dehydrogenase (ALDH9A1) from Homo sapiens (Human).